The chain runs to 301 residues: Probable alpha-L-glutamate ligase (301 aa).

Positions 104 to 287 (MQLLSRKGIG…VAGLIIDFIE (184 aa)) constitute an ATP-grasp domain. Residues lysine 141, 178-179 (EF), aspartate 187, and 211-213 (RSN) each bind ATP. Mg(2+) contacts are provided by aspartate 248, glutamate 260, and asparagine 262. Residues aspartate 248, glutamate 260, and asparagine 262 each contribute to the Mn(2+) site.

This sequence belongs to the RimK family. It depends on Mg(2+) as a cofactor. Mn(2+) serves as cofactor.

The chain is Probable alpha-L-glutamate ligase from Aliivibrio fischeri (strain MJ11) (Vibrio fischeri).